We begin with the raw amino-acid sequence, 1265 residues long: Shugoshin 2 (1265 aa).

Residues 69–116 (KENSRRITTEKMLLQKEVEKLNFENTFLRLKLNNLNKKLIDIEALMNN) adopt a coiled-coil conformation. 4 disordered regions span residues 161–202 (LTSN…STQD), 230–287 (DVPP…NLSA), 305–339 (LNCNNEINGHTNETNTEMQRNKQDLPGLSSESARE), and 381–447 (GIKK…GAED). A compositionally biased stretch (polar residues) spans 190-202 (SSGSTTQPLSTQD). Basic and acidic residues predominate over residues 232-242 (PPRESHSHSDQ). A compositionally biased stretch (polar residues) spans 305–322 (LNCNNEINGHTNETNTEM). 2 stretches are compositionally biased toward basic and acidic residues: residues 389-410 (KTNEHGMKTFRKVKDSSSEKKR) and 425-446 (IGEKIENRTERSDVLDGKRGAE). Residues 452–476 (FNNEQLAQMNEQLAQVNELKKMTLQ) adopt a coiled-coil conformation. A disordered region spans residues 499 to 526 (EQEETYSLSQSSGKFHQESKFDKGQNSL). Polar residues predominate over residues 503–512 (TYSLSQSSGK). The stretch at 603-626 (EQNESNINKLRKKVNRKTEIISGM) forms a coiled coil. Over residues 1073–1083 (NKMTSKSKKRK) the composition is skewed to basic residues. A disordered region spans residues 1073-1093 (NKMTSKSKKRKTSIDPSPESH). Ser-1144 carries the phosphoserine modification. Residues 1200–1265 (KVNRRTQKSG…EPSLRDKMRR (66 aa)) are disordered. Residues 1217–1230 (DLSNTSFVSNNTAE) show a composition bias toward polar residues. The span at 1231-1243 (SENKSEDLSSERT) shows a compositional bias: basic and acidic residues.

This sequence belongs to the shugoshin family. Part of an astrin (SPAG5) -kinastrin (SKAP) complex containing KNSTRN, SPAG5, PLK1, DYNLL1 and SGO2. Interacts with CDCA8. Directly interacts with PPP2CA.

It localises to the nucleus. The protein localises to the chromosome. The protein resides in the centromere. Its subcellular location is the kinetochore. Cooperates with PPP2CA to protect centromeric cohesin from separase-mediated cleavage in oocytes specifically during meiosis I. Has a crucial role in protecting REC8 at centromeres from cleavage by separase. During meiosis, protects centromeric cohesion complexes until metaphase II/anaphase II transition, preventing premature release of meiosis-specific REC8 cohesin complexes from anaphase I centromeres. Is thus essential for an accurate gametogenesis. May act by targeting PPP2CA to centromeres, thus leading to cohesin dephosphorylation. Essential for recruiting KIF2C to the inner centromere and for correcting defective kinetochore attachments. Involved in centromeric enrichment of AUKRB in prometaphase. The protein is Shugoshin 2 of Homo sapiens (Human).